The primary structure comprises 332 residues: NADH-quinone oxidoreductase subunit H (332 aa).

9 helical membrane passes run 16-36 (VFFGLGALLLLVVLGFVTYAI), 87-107 (YVLAPIIAFTPSFMVLAALPF), 116-136 (IGVGLLYYIAVSGLTTIGVVT), 164-184 (LVMSALGVVLLAGSMNLVDIV), 190-210 (VWFIFAQPLAFLIFFIAAVAE), 231-251 (VEYSGFRWAFFMLAEYVYLFA), 253-273 (AALITILFLGGWHPVAFLGWI), 277-297 (VWFALKFCAIVYVLIWFRATF), and 312-332 (VLLPLSLVNIVLTAVIKSLFF).

This sequence belongs to the complex I subunit 1 family. As to quaternary structure, NDH-1 is composed of 14 different subunits. Subunits NuoA, H, J, K, L, M, N constitute the membrane sector of the complex.

It localises to the cell membrane. The catalysed reaction is a quinone + NADH + 5 H(+)(in) = a quinol + NAD(+) + 4 H(+)(out). Functionally, NDH-1 shuttles electrons from NADH, via FMN and iron-sulfur (Fe-S) centers, to quinones in the respiratory chain. The immediate electron acceptor for the enzyme in this species is believed to be ubiquinone. Couples the redox reaction to proton translocation (for every two electrons transferred, four hydrogen ions are translocated across the cytoplasmic membrane), and thus conserves the redox energy in a proton gradient. This subunit may bind ubiquinone. The sequence is that of NADH-quinone oxidoreductase subunit H from Geobacillus thermodenitrificans (strain NG80-2).